We begin with the raw amino-acid sequence, 402 residues long: Multidrug resistance protein MdtH (402 aa).

Residues 1–12 are Cytoplasmic-facing; that stretch reads MSRVSQARNLGK. Residues 13-33 traverse the membrane as a helical segment; that stretch reads YFLLIDNMLVVLGFFVVFPLI. Residues 34 to 98 are Periplasmic-facing; it reads SIRFVDQMGW…GFATMGIAHE (65 aa). A helical transmembrane segment spans residues 99-116; the sequence is PWLLWFSCFLSGLGGTLF. Residues 117–138 lie on the Cytoplasmic side of the membrane; that stretch reads DPPRSALVVKLIRPEQRGRFFS. Residues 139-159 traverse the membrane as a helical segment; it reads LLMMQDSAGAVIGALLGSWLL. Over 160–164 the chain is Periplasmic; sequence QYDFR. The helical transmembrane segment at 165 to 185 threads the bilayer; it reads LVCATGAILFILCALFNAWLL. Over 186–213 the chain is Cytoplasmic; the sequence is PAWKLSTVRTPVREGMRRVMSDKRFVTY. Residues 214–234 form a helical membrane-spanning segment; it reads VLTLAGYYMLAVQVMLMLPIM. Residues 235-243 are Periplasmic-facing; sequence VNDIAGSPA. Residues 244 to 264 traverse the membrane as a helical segment; it reads AVKWMYAIEACLSLTLLYPIA. Over 265-276 the chain is Cytoplasmic; the sequence is RWSEKRFRLEHR. The helical transmembrane segment at 277–297 threads the bilayer; the sequence is LMAGLLVMSLSMIPIGMVGNL. Over 298–299 the chain is Periplasmic; sequence QQ. A helical membrane pass occupies residues 300 to 320; the sequence is LFTLICAFYIGSVIAEPARET. At 321–339 the chain is on the cytoplasmic side; the sequence is LSASLADARARGSYMGFSR. Residues 340 to 360 form a helical membrane-spanning segment; the sequence is LGLAIGGAIGYIGGGWLFDMG. The Periplasmic portion of the chain corresponds to 361–367; sequence KALTQPE. The helical transmembrane segment at 368-388 threads the bilayer; that stretch reads LPWMMLGIIGFITFLALGWQF. The Cytoplasmic portion of the chain corresponds to 389-402; that stretch reads SHKRTPRRMLEPGA.

This sequence belongs to the major facilitator superfamily. DHA1 family. MdtH (TC 2.A.1.2.21) subfamily.

The protein resides in the cell inner membrane. The sequence is that of Multidrug resistance protein MdtH from Salmonella paratyphi B (strain ATCC BAA-1250 / SPB7).